The sequence spans 404 residues: Propionate kinase (404 aa).

It belongs to the acetokinase family. PduW subfamily.

It localises to the cytoplasm. It catalyses the reaction propanoate + ATP = propanoyl phosphate + ADP. It functions in the pathway polyol metabolism; 1,2-propanediol degradation. Functionally, works with phosphate acetyltransferase (pta) to capture exogenous propionate and regenerate propionyl-CoA during degradation of 1,2-propanediol (1,2-PD). The polypeptide is Propionate kinase (Klebsiella pneumoniae (strain 342)).